Consider the following 495-residue polypeptide: MKVEVMSSHRVHPEHKKASEETAILPVIDSWYCYWRTLAAIYLFDAYSGPELYTDLRQSLSKTLDDFPQLAGTLDNCNIQVEDKSGRSVRRTRVTWGGNTLGGEFIEAKTNARVRSLLPPSIQNISSFAWDRSDRTLRPLFPATLPETSGIRVQVTSFKCGGFGIALDMDHALADAHTVGLFIGHWSAIHTRMFTSTTTFPSQISLPNVMFNPQFVEKKVHETDNTYGSKMVMLDRARELPTRRPDLRDKSSQRTMQGNMFKPPPKPSAGVPYLLHFSASEYERITRGIQQATASPQITDQVAFVSFLWAALNKARARCSVGQAVDLHLPTSFRWTLGLPEGLIGSPLVAVMMDGGPDGEVCYTDPVVLATIITKTLERYTEDALLAIVYDASLRDSPASMLRGFERRERMEFTSGVGFGSDKLSFGCHSPVFVGPIILPVDNLFIMAEGMRTSEAHSSKWYKHGANIFVSLPQDVFRALLADPALINVELLGDI.

The active-site Proton acceptor is His171.

Belongs to the plant acyltransferase family.

Acyltransferase; part of the gene cluster that mediates the biosynthesis of abscisic acid (ABA), a phytohormone that acts antagonistically toward salicylic acid (SA), jasmonic acid (JA) and ethylene (ETH) signaling, to impede plant defense responses. The first step of the pathway catalyzes the reaction from farnesyl diphosphate to alpha-ionylideneethane performed by the alpha-ionylideneethane synthase abl3 via a three-step reaction mechanism involving 2 neutral intermediates, beta-farnesene and allofarnesene. The cytochrome P450 monooxygenase abl1 might then be involved in the conversion of alpha-ionylideneethane to alpha-ionylideneacetic acid. Alpha-ionylideneacetic acid is further converted to abscisic acid in 2 steps involving the cytochrome P450 monooxygenase abl2 and the short-chain dehydrogenase/reductase abl4, via the intermediates 1'-deoxy-ABA or 1',4'-trans-diol-ABA, depending on the order of action of these 2 enzymes. Abl2 is responsible for the hydroxylation of carbon atom C-1' and abl4 might be involved in the oxidation of the C-4' carbon atom. The acyltransferase abl6 seems not essential for the biosynthesis of ABA, but it may acetylate ABA as part of the synthesis of another ABA-related molecule. This Leptosphaeria maculans (strain JN3 / isolate v23.1.3 / race Av1-4-5-6-7-8) (Blackleg fungus) protein is Acyltransferase abl6.